A 549-amino-acid polypeptide reads, in one-letter code: Protein X92 (549 aa).

The chain is Protein X92 from Trypanosoma brucei brucei.